The sequence spans 307 residues: Probable transposase for transposon Tn903 (307 aa).

Functionally, required for transposition of transposon Tn903. The polypeptide is Probable transposase for transposon Tn903 (Escherichia coli).